The following is a 163-amino-acid chain: MKVTTTRFGELDIEEGKVIHMPEGMLGFVEKRFILLTPENLGPFCWLQAVDNPDLAFVVADAKNCAPGYTFALTAEECRALELSERSEAIFLLVVTMAPEPGDITVNLRGPIVLNPERLIARQIVIEGEKYTTRHPFFETSEKKQSGLQRLERQPEKSVPPAG.

Over residues 136 to 156 (PFFETSEKKQSGLQRLERQPE) the composition is skewed to basic and acidic residues. Positions 136-163 (PFFETSEKKQSGLQRLERQPEKSVPPAG) are disordered.

This sequence belongs to the FliW family. As to quaternary structure, interacts with translational regulator CsrA and flagellin(s).

Its subcellular location is the cytoplasm. Its function is as follows. Acts as an anti-CsrA protein, binds CsrA and prevents it from repressing translation of its target genes, one of which is flagellin. Binds to flagellin and participates in the assembly of the flagellum. This is Flagellar assembly factor FliW from Geotalea uraniireducens (strain Rf4) (Geobacter uraniireducens).